We begin with the raw amino-acid sequence, 528 residues long: Probable rhamnogalacturonate lyase A (528 aa).

An N-terminal signal peptide occupies residues 1-20 (MLSKATLLLSLPFWARVANA). N-linked (GlcNAc...) asparagine glycosylation is present at N46. Cystine bridges form between C50/C93 and C184/C193. N351 carries N-linked (GlcNAc...) asparagine glycosylation.

It belongs to the polysaccharide lyase 4 family.

Its subcellular location is the secreted. The enzyme catalyses Endotype eliminative cleavage of L-alpha-rhamnopyranosyl-(1-&gt;4)-alpha-D-galactopyranosyluronic acid bonds of rhamnogalacturonan I domains in ramified hairy regions of pectin leaving L-rhamnopyranose at the reducing end and 4-deoxy-4,5-unsaturated D-galactopyranosyluronic acid at the non-reducing end.. Pectinolytic enzymes consist of four classes of enzymes: pectin lyase, polygalacturonase, pectin methylesterase and rhamnogalacturonase. Degrades the rhamnogalacturonan I (RG-I) backbone of pectin. The polypeptide is Probable rhamnogalacturonate lyase A (rglA) (Neosartorya fischeri (strain ATCC 1020 / DSM 3700 / CBS 544.65 / FGSC A1164 / JCM 1740 / NRRL 181 / WB 181) (Aspergillus fischerianus)).